The primary structure comprises 365 residues: Probable caffeine synthase 2 (365 aa).

An S-adenosyl-L-homocysteine-binding site is contributed by tyrosine 19. Position 26 (threonine 26) interacts with caffeine. Residues cysteine 62, aspartate 99, leucine 100, serine 134, and phenylalanine 135 each contribute to the S-adenosyl-L-homocysteine site. Tyrosine 152, histidine 155, and tryptophan 156 together coordinate caffeine. Residue asparagine 173 coordinates Mg(2+). Residue arginine 221 coordinates caffeine. Aspartate 259, phenylalanine 261, and asparagine 262 together coordinate Mg(2+). Phenylalanine 317 contacts caffeine.

Belongs to the methyltransferase superfamily. Type-7 methyltransferase family. It depends on Mg(2+) as a cofactor.

The enzyme catalyses 7-methylxanthine + S-adenosyl-L-methionine = theobromine + S-adenosyl-L-homocysteine + H(+). It carries out the reaction theobromine + S-adenosyl-L-methionine = caffeine + S-adenosyl-L-homocysteine + H(+). The catalysed reaction is 1,7-dimethylxanthine + S-adenosyl-L-methionine = caffeine + S-adenosyl-L-homocysteine + H(+). It functions in the pathway alkaloid biosynthesis. Its function is as follows. May be involved in the biosynthesis of caffeine. Catalyzes the conversion of 7-methylxanthine (7mX) to theobromine and of theobromine to caffeine. Has 1-N-methylation activity. The sequence is that of Probable caffeine synthase 2 from Camellia sinensis (Tea plant).